A 249-amino-acid chain; its full sequence is tRNA pseudouridine synthase A (249 aa).

The active-site Nucleophile is the Asp53. Position 111 (Tyr111) interacts with substrate.

The protein belongs to the tRNA pseudouridine synthase TruA family. Homodimer.

It carries out the reaction uridine(38/39/40) in tRNA = pseudouridine(38/39/40) in tRNA. In terms of biological role, formation of pseudouridine at positions 38, 39 and 40 in the anticodon stem and loop of transfer RNAs. The protein is tRNA pseudouridine synthase A of Streptococcus mutans serotype c (strain ATCC 700610 / UA159).